The sequence spans 463 residues: Putative glycine--tRNA ligase, cytoplasmic (463 aa).

The tract at residues 25–54 (TLEDSHAAKPETNAAIELPNKSKPEKSAVE) is disordered. Basic and acidic residues predominate over residues 44-54 (NKSKPEKSAVE). Residues arginine 153 and glutamate 239 each contribute to the substrate site. Residues 271 to 273 (RNE) and 281 to 286 (LRTREF) contribute to the ATP site. Substrate is bound by residues 286 to 290 (FTLAE) and asparagine 376. ATP is bound at residue 398–399 (EC).

It belongs to the class-II aminoacyl-tRNA synthetase family. In terms of assembly, homodimer.

It localises to the cytoplasm. It catalyses the reaction tRNA(Gly) + glycine + ATP = glycyl-tRNA(Gly) + AMP + diphosphate. Catalyzes the attachment of glycine to tRNA(Gly). Is also able produce diadenosine tetraphosphate (Ap4A), a universal pleiotropic signaling molecule needed for cell regulation pathways, by direct condensation of 2 ATPs. The chain is Putative glycine--tRNA ligase, cytoplasmic from Arabidopsis thaliana (Mouse-ear cress).